Consider the following 619-residue polypeptide: TOX high mobility group box family member 4 (619 aa).

Disordered stretches follow at residues 153-227 (LGLS…QKPV) and 304-337 (DMDP…PPAL). T176 is modified (phosphothreonine). Residues S178, S181, and S182 each carry the phosphoserine modification. Basic and acidic residues predominate over residues 183 to 193 (LHEDGVEEFRR). Residues 208–218 (KQKAPKKRKKK) are compositionally biased toward basic residues. The Nuclear localization signal signature appears at 213–218 (KKRKKK). The segment at residues 223 to 291 (PQKPVSAYAL…EYLKALAAYK (69 aa)) is a DNA-binding region (HMG box). The span at 307–319 (PAPPSQTPSPPPV) shows a compositional bias: pro residues. Position 313 is a phosphothreonine (T313). The residue at position 315 (S315) is a Phosphoserine. The segment covering 320–337 (AAADPASPAPASTEPPAL) has biased composition (low complexity). R479 carries the post-translational modification Asymmetric dimethylarginine. The disordered stretch occupies residues 507–529 (PPPVESSPEQPVNNSPETHTVEE). Residues 512-524 (SSPEQPVNNSPET) show a composition bias toward low complexity. Residues S548, S550, S558, S560, and S565 each carry the phosphoserine modification.

In terms of assembly, component of the PNUTS-PP1 phosphatase complex, composed of PPP1R10/PNUTS, TOX4, WDR82 and PPP1CA or PPP1CB or PPP1CC. Interacts with PPP1R10/PNUTS. Interacts with FOXO1 and CREB1 (increased by cAMP); FOXO1 and CREB1 are required for full induction of TOX4-dependent activity and the interactions are inhibited by insulin.

It localises to the nucleus. The protein resides in the chromosome. Its activity is regulated as follows. In liver, recruited to target gene promoters following treatment with dexamethasone and cAMP. Binding is decreased in presence of insulin. Functionally, transcription factor that modulates cell fate reprogramming from the somatic state to the pluripotent and neuronal fate. In liver, controls the expression of hormone-regulated gluconeogenic genes such as G6PC1 and PCK1. This regulation is independent of the insulin receptor activation. Also acts as a regulatory component of protein phosphatase 1 (PP1) complexes. Component of the PNUTS-PP1 protein phosphatase complex, a PP1 complex that regulates RNA polymerase II transcription pause-release. PNUTS-PP1 also plays a role in the control of chromatin structure and cell cycle progression during the transition from mitosis into interphase. This Bos taurus (Bovine) protein is TOX high mobility group box family member 4 (TOX4).